A 417-amino-acid polypeptide reads, in one-letter code: Secreted aspartic protease 4 (417 aa).

An N-terminal signal peptide occupies residues 1 to 18; that stretch reads MFLQNILSVLAFALLIDA. A propeptide spans 19–75 (activation peptide); the sequence is APVKRSTGFVTLDFNVKRSLVDPKDPTVEVKRSPLFLDIEPTEIPVDDTGRNDVGKR. The 315-residue stretch at 89–403 folds into the Peptidase A1 domain; that stretch reads YSADITIGSN…DLDDRKISMA (315 aa). Residue D107 is part of the active site. 107-109 is a pepstatin A binding site; that stretch reads DTG. A disulfide bridge links C122 with C134. The N-linked (GlcNAc...) asparagine glycan is linked to N137. 160–161 provides a ligand contact to pepstatin A; sequence AD. Residue D267 participates in Zn(2+) binding. D293 is an active-site residue. 293–297 contributes to the pepstatin A binding site; that stretch reads DSGTT. C331 and C369 form a disulfide bridge.

Belongs to the peptidase A1 family. As to quaternary structure, monomer.

Its subcellular location is the secreted. It carries out the reaction Preferential cleavage at the carboxyl of hydrophobic amino acids, but fails to cleave 15-Leu-|-Tyr-16, 16-Tyr-|-Leu-17 and 24-Phe-|-Phe-25 of insulin B chain. Activates trypsinogen, and degrades keratin.. Its activity is regulated as follows. Activity is inhibited by squash aspartic peptidase inhibitor (SQAPI). Functionally, secreted aspartic peptidases (SAPs) are a group of ten acidic hydrolases considered as key virulence factors. These enzymes supply the fungus with nutrient amino acids as well as are able to degrade the selected host's proteins involved in the immune defense. Moreover, acts toward human hemoglobin though limited proteolysis to generate a variety of antimicrobial hemocidins, enabling to compete with the other microorganisms of the same physiological niche using the microbicidal peptides generated from the host protein. Its function is as follows. Plays a key role in defense against host by cleaving histatin-5 (Hst 5), a peptide from human saliva that carries out fungicidal activity. The cleavage rate decreases in an order of SAP2 &gt; SAP9 &gt; SAP3 &gt; SAP7 &gt; SAP4 &gt; SAP1 &gt; SAP8. The first cleavage occurs between residues 'Lys-17' and 'His-18' of Hst 5, giving DSHAKRHHGYKRKFHEK and HHSHRGY peptides. Simultaneously, the DSHAKRHHGY and KRKFHEKHHSHRGY peptides are also formed. The chain is Secreted aspartic protease 4 from Candida albicans (strain SC5314 / ATCC MYA-2876) (Yeast).